The sequence spans 393 residues: ATP phosphoribosyltransferase regulatory subunit (393 aa).

Belongs to the class-II aminoacyl-tRNA synthetase family. HisZ subfamily. As to quaternary structure, heteromultimer composed of HisG and HisZ subunits.

The protein resides in the cytoplasm. It participates in amino-acid biosynthesis; L-histidine biosynthesis; L-histidine from 5-phospho-alpha-D-ribose 1-diphosphate: step 1/9. Its function is as follows. Required for the first step of histidine biosynthesis. May allow the feedback regulation of ATP phosphoribosyltransferase activity by histidine. The protein is ATP phosphoribosyltransferase regulatory subunit of Chromohalobacter salexigens (strain ATCC BAA-138 / DSM 3043 / CIP 106854 / NCIMB 13768 / 1H11).